The sequence spans 1143 residues: DNA-directed RNA polymerase subunit beta (1143 aa).

It belongs to the RNA polymerase beta chain family. In terms of assembly, in plastids the minimal PEP RNA polymerase catalytic core is composed of four subunits: alpha, beta, beta', and beta''. When a (nuclear-encoded) sigma factor is associated with the core the holoenzyme is formed, which can initiate transcription.

Its subcellular location is the plastid. The protein resides in the chloroplast. The enzyme catalyses RNA(n) + a ribonucleoside 5'-triphosphate = RNA(n+1) + diphosphate. In terms of biological role, DNA-dependent RNA polymerase catalyzes the transcription of DNA into RNA using the four ribonucleoside triphosphates as substrates. The chain is DNA-directed RNA polymerase subunit beta from Pyropia yezoensis (Susabi-nori).